Here is a 404-residue protein sequence, read N- to C-terminus: AT-hook motif nuclear-localized protein 6 (404 aa).

The tract at residues 40–112 is disordered; it reads TTVVTPLPPP…TPISSSIPLS (73 aa). Residues 45-55 show a composition bias toward pro residues; the sequence is PLPPPPAPSSA. The segment covering 56-70 has biased composition (low complexity); that stretch reads PVPTTVTPGSATAST. The Bipartite nuclear localization signal motif lies at 76-84; sequence KKKRGRPRK. A DNA-binding region (a.T hook) is located at residues 76-88; it reads KKKRGRPRKYAPD. The segment covering 98–112 has biased composition (low complexity); sequence PTLSPTPISSSIPLS. Residues 157–299 form the PPC domain; that stretch reads GANFTTHQFT…RVMEAFAPPQ (143 aa). Residues 365–404 form a disordered region; sequence AYHGYGNMNTGTTHKEEHEDEDGGDDDDDSGDTRSQSHSG. The segment covering 382–394 has biased composition (acidic residues); the sequence is HEDEDGGDDDDDS.

It localises to the nucleus. Transcription factor that specifically binds AT-rich DNA sequences related to the nuclear matrix attachment regions (MARs). This is AT-hook motif nuclear-localized protein 6 from Arabidopsis thaliana (Mouse-ear cress).